The sequence spans 225 residues: Ribonuclease 3 (225 aa).

One can recognise an RNase III domain in the interval 5–127 (IEKLTRQLGY…IIGAVYLDSD (123 aa)). A Mg(2+)-binding site is contributed by E40. The active site involves D44. Residues D113 and E116 each coordinate Mg(2+). The active site involves E116. Residues 154-224 (DPKTRLQEFL…AELALEQLTN (71 aa)) enclose the DRBM domain.

This sequence belongs to the ribonuclease III family. Homodimer. Mg(2+) is required as a cofactor.

It is found in the cytoplasm. The enzyme catalyses Endonucleolytic cleavage to 5'-phosphomonoester.. In terms of biological role, digests double-stranded RNA. Involved in the processing of primary rRNA transcript to yield the immediate precursors to the large and small rRNAs (23S and 16S). Processes some mRNAs, and tRNAs when they are encoded in the rRNA operon. Processes pre-crRNA and tracrRNA of type II CRISPR loci if present in the organism. In Vibrio vulnificus (strain CMCP6), this protein is Ribonuclease 3.